We begin with the raw amino-acid sequence, 215 residues long: Probable transaldolase (215 aa).

Catalysis depends on lysine 83, which acts as the Schiff-base intermediate with substrate.

This sequence belongs to the transaldolase family. Type 3B subfamily.

It localises to the cytoplasm. The enzyme catalyses D-sedoheptulose 7-phosphate + D-glyceraldehyde 3-phosphate = D-erythrose 4-phosphate + beta-D-fructose 6-phosphate. It participates in carbohydrate degradation; pentose phosphate pathway; D-glyceraldehyde 3-phosphate and beta-D-fructose 6-phosphate from D-ribose 5-phosphate and D-xylulose 5-phosphate (non-oxidative stage): step 2/3. Functionally, transaldolase is important for the balance of metabolites in the pentose-phosphate pathway. This is Probable transaldolase from Methanococcus vannielii (strain ATCC 35089 / DSM 1224 / JCM 13029 / OCM 148 / SB).